The chain runs to 229 residues: Transcriptional regulatory protein YxdJ (229 aa).

The 114-residue stretch at 3-116 (KIMIVEDSED…IVLAKIKSQI (114 aa)) folds into the Response regulatory domain. 4-aspartylphosphate is present on Asp52. A DNA-binding region (ompR/PhoB-type) is located at residues 129-227 (EKVVEYAGVQ…VRGEGYQLRA (99 aa)).

In terms of processing, phosphorylated by YxdK.

Its subcellular location is the cytoplasm. Functionally, probable member of the two-component regulatory system YxdK/YxdJ. Positively regulates the expression of the yxdLMyxeA operon by direct interaction with its promoter region. Could also indirectly regulate the expression of the dlt operon. The chain is Transcriptional regulatory protein YxdJ (yxdJ) from Bacillus subtilis (strain 168).